The chain runs to 316 residues: Lipoyl synthase (316 aa).

Residues cysteine 60, cysteine 65, cysteine 71, cysteine 86, cysteine 90, cysteine 93, and serine 297 each contribute to the [4Fe-4S] cluster site. Residues 72-286 (WEDREATFLI…KDEADEVGFT (215 aa)) form the Radical SAM core domain.

Belongs to the radical SAM superfamily. Lipoyl synthase family. [4Fe-4S] cluster serves as cofactor.

Its subcellular location is the cytoplasm. It carries out the reaction [[Fe-S] cluster scaffold protein carrying a second [4Fe-4S](2+) cluster] + N(6)-octanoyl-L-lysyl-[protein] + 2 oxidized [2Fe-2S]-[ferredoxin] + 2 S-adenosyl-L-methionine + 4 H(+) = [[Fe-S] cluster scaffold protein] + N(6)-[(R)-dihydrolipoyl]-L-lysyl-[protein] + 4 Fe(3+) + 2 hydrogen sulfide + 2 5'-deoxyadenosine + 2 L-methionine + 2 reduced [2Fe-2S]-[ferredoxin]. It participates in protein modification; protein lipoylation via endogenous pathway; protein N(6)-(lipoyl)lysine from octanoyl-[acyl-carrier-protein]: step 2/2. Catalyzes the radical-mediated insertion of two sulfur atoms into the C-6 and C-8 positions of the octanoyl moiety bound to the lipoyl domains of lipoate-dependent enzymes, thereby converting the octanoylated domains into lipoylated derivatives. The chain is Lipoyl synthase from Nocardioides sp. (strain ATCC BAA-499 / JS614).